The chain runs to 264 residues: tRNA (guanine-N(1)-)-methyltransferase (264 aa).

Residues Gly113 and 133 to 138 (IGDYVL) contribute to the S-adenosyl-L-methionine site. The disordered stretch occupies residues 244 to 264 (VQQAATPGGQRRPPWHRDSRA).

Belongs to the RNA methyltransferase TrmD family. As to quaternary structure, homodimer.

It is found in the cytoplasm. The catalysed reaction is guanosine(37) in tRNA + S-adenosyl-L-methionine = N(1)-methylguanosine(37) in tRNA + S-adenosyl-L-homocysteine + H(+). In terms of biological role, specifically methylates guanosine-37 in various tRNAs. The chain is tRNA (guanine-N(1)-)-methyltransferase from Frankia alni (strain DSM 45986 / CECT 9034 / ACN14a).